The chain runs to 147 residues: NADH-quinone oxidoreductase subunit A (147 aa).

Transmembrane regions (helical) follow at residues 16–36 (FAIF…GGWF), 68–88 (FYLV…LFAW), and 98–118 (VGFV…VYLV).

The protein belongs to the complex I subunit 3 family. In terms of assembly, NDH-1 is composed of 13 different subunits. Subunits NuoA, H, J, K, L, M, N constitute the membrane sector of the complex.

It localises to the cell inner membrane. The catalysed reaction is a quinone + NADH + 5 H(+)(in) = a quinol + NAD(+) + 4 H(+)(out). In terms of biological role, NDH-1 shuttles electrons from NADH, via FMN and iron-sulfur (Fe-S) centers, to quinones in the respiratory chain. The immediate electron acceptor for the enzyme in this species is believed to be ubiquinone. Couples the redox reaction to proton translocation (for every two electrons transferred, four hydrogen ions are translocated across the cytoplasmic membrane), and thus conserves the redox energy in a proton gradient. The protein is NADH-quinone oxidoreductase subunit A of Citrobacter koseri (strain ATCC BAA-895 / CDC 4225-83 / SGSC4696).